The primary structure comprises 838 residues: Envelope glycoprotein H (838 aa).

Positions 1–18 are cleaved as a signal peptide; it reads MGNGLWFVGVIILGAAWG. The Virion surface segment spans residues 19 to 803; that stretch reads QVHDWTEQTD…DTQPVAAIAP (785 aa). N73 and N120 each carry an N-linked (GlcNAc...) asparagine; by host glycan. The interval 174–204 is disordered; the sequence is FPRGDNVATASHPSGPRDTPPPRPPVGARRH. N-linked (GlcNAc...) asparagine; by host glycosylation occurs at N216. An interaction with gL region spans residues 259–323; that stretch reads DAALVRARYG…PGGPRYRVFV (65 aa). N-linked (GlcNAc...) asparagine; by host glycans are attached at residues N332, N437, N670, and N784. A helical membrane pass occupies residues 804–824; sequence GFLAASALGVVMITAALAGIL. The Intravirion segment spans residues 825–838; sequence KVLRTSVPFFWRRE.

It belongs to the herpesviridae glycoprotein H family. As to quaternary structure, interacts with glycoprotein L (gL); this interaction is necessary for the correct processing and cell surface expression of gH. The heterodimer gH/gL seems to interact with gB trimers during fusion. N-glycosylated, O-glycosylated, and sialylated.

The protein resides in the virion membrane. The protein localises to the host cell membrane. It is found in the host endosome membrane. Its function is as follows. The heterodimer glycoprotein H-glycoprotein L is required for the fusion of viral and plasma membranes leading to virus entry into the host cell. Following initial binding to host receptor, membrane fusion is mediated by the fusion machinery composed of gB and the heterodimer gH/gL. May also be involved in the fusion between the virion envelope and the outer nuclear membrane during virion morphogenesis. The protein is Envelope glycoprotein H of Homo sapiens (Human).